Consider the following 860-residue polypeptide: Leucine--tRNA ligase (860 aa).

A 'HIGH' region motif is present at residues 42-52 (PYPSGRLHMGH). The 'KMSKS' region motif lies at 619-623 (KMSKS). Residue lysine 622 coordinates ATP.

Belongs to the class-I aminoacyl-tRNA synthetase family.

The protein localises to the cytoplasm. It catalyses the reaction tRNA(Leu) + L-leucine + ATP = L-leucyl-tRNA(Leu) + AMP + diphosphate. The chain is Leucine--tRNA ligase from Pectobacterium atrosepticum (strain SCRI 1043 / ATCC BAA-672) (Erwinia carotovora subsp. atroseptica).